The primary structure comprises 355 residues: Peptide chain release factor 1 (355 aa).

The residue at position 231 (glutamine 231) is an N5-methylglutamine. The disordered stretch occupies residues 283–303; sequence LAKESEARKSQVGSGDRSERI.

The protein belongs to the prokaryotic/mitochondrial release factor family. Methylated by PrmC. Methylation increases the termination efficiency of RF1.

It localises to the cytoplasm. Its function is as follows. Peptide chain release factor 1 directs the termination of translation in response to the peptide chain termination codons UAG and UAA. This chain is Peptide chain release factor 1, found in Campylobacter lari (strain RM2100 / D67 / ATCC BAA-1060).